We begin with the raw amino-acid sequence, 751 residues long: Dendritic arbor reduction protein 1 (751 aa).

Over residues 57 to 89 (NNNNTSSNNNHSSNSSSNNSNGSQTPNGNNNSS) the composition is skewed to low complexity. Disordered regions lie at residues 57-167 (NNNN…PNSN), 248-275 (LMLS…ATSQ), 304-351 (TEKQ…QQHL), 374-410 (LQQQ…SSYQ), 458-578 (SATA…AATG), and 594-639 (SAIQ…AAHI). Residues 95-125 (HQHHQFHHHLHHHHSHQHHHQHHHLHQHHSH) show a composition bias toward basic residues. Residues 153–167 (AQQQQLQPAGSPNSN) are compositionally biased toward polar residues. Low complexity-rich tracts occupy residues 251 to 267 (SSSG…SSSN), 309 to 351 (RQQQ…QQHL), and 374 to 393 (LQQQ…SSSS). A compositionally biased stretch (polar residues) spans 400-410 (GDNSGNTSSYQ). 3 stretches are compositionally biased toward low complexity: residues 458 to 513 (SATA…SSAS), 527 to 548 (DPGS…QRRT), and 594 to 610 (SAIQ…QVPQ). C2H2-type zinc fingers lie at residues 664-688 (HHCD…QRIH), 694-718 (YTCQ…YRKH), and 724-746 (FKCI…MKRH).

The protein belongs to the krueppel C2H2-type zinc-finger protein family. As to expression, highly enriched in the peripheral nervous system but is absent from the central nervous system. Expressed in neurons with more than one dendrite including da neurons, bd neurons and the dmd1 neuron but undetectable in neurons with single dendrites such as external sensory organ neurons and chodonotal neurons.

The protein localises to the nucleus. In terms of biological role, transcriptional regulator which promotes dendrite growth by suppressing, either directly or indirectly, the expression of the microtubule-severing protein spas. Determines multipolar neuron morphology in postmitotic neurons by positively regulating the expression of genes involved in nuclear positioning including several dynein genes and the nuclear migration protein nudC. The protein is Dendritic arbor reduction protein 1 of Drosophila melanogaster (Fruit fly).